A 701-amino-acid polypeptide reads, in one-letter code: Elongation factor G (701 aa).

In terms of domain architecture, tr-type G spans 10–290 (AKVRNIGIMA…AVVDYLPSPL (281 aa)). GTP-binding positions include 19–26 (AHIDAGKT), 83–87 (DTPGH), and 137–140 (NKMD).

The protein belongs to the TRAFAC class translation factor GTPase superfamily. Classic translation factor GTPase family. EF-G/EF-2 subfamily.

Its subcellular location is the cytoplasm. Functionally, catalyzes the GTP-dependent ribosomal translocation step during translation elongation. During this step, the ribosome changes from the pre-translocational (PRE) to the post-translocational (POST) state as the newly formed A-site-bound peptidyl-tRNA and P-site-bound deacylated tRNA move to the P and E sites, respectively. Catalyzes the coordinated movement of the two tRNA molecules, the mRNA and conformational changes in the ribosome. This is Elongation factor G from Tropheryma whipplei (strain TW08/27) (Whipple's bacillus).